Here is a 337-residue protein sequence, read N- to C-terminus: Probable deoxyhypusine synthase (337 aa).

Catalysis depends on Lys-308, which acts as the Nucleophile.

This sequence belongs to the deoxyhypusine synthase family. The cofactor is NAD(+).

It catalyses the reaction [eIF5A protein]-L-lysine + spermidine = [eIF5A protein]-deoxyhypusine + propane-1,3-diamine. It functions in the pathway protein modification; eIF5A hypusination. Catalyzes the NAD-dependent oxidative cleavage of spermidine and the subsequent transfer of the butylamine moiety of spermidine to the epsilon-amino group of a specific lysine residue of the eIF-5A precursor protein to form the intermediate deoxyhypusine residue. This is Probable deoxyhypusine synthase from Thermococcus kodakarensis (strain ATCC BAA-918 / JCM 12380 / KOD1) (Pyrococcus kodakaraensis (strain KOD1)).